A 190-amino-acid polypeptide reads, in one-letter code: Potassium-transporting ATPase KdpC subunit (190 aa).

A helical transmembrane segment spans residues 10-30 (TFLFLLLITGGVYPLLTTALG).

Belongs to the KdpC family. The system is composed of three essential subunits: KdpA, KdpB and KdpC.

It is found in the cell inner membrane. Part of the high-affinity ATP-driven potassium transport (or Kdp) system, which catalyzes the hydrolysis of ATP coupled with the electrogenic transport of potassium into the cytoplasm. This subunit acts as a catalytic chaperone that increases the ATP-binding affinity of the ATP-hydrolyzing subunit KdpB by the formation of a transient KdpB/KdpC/ATP ternary complex. This chain is Potassium-transporting ATPase KdpC subunit, found in Escherichia coli O45:K1 (strain S88 / ExPEC).